The following is a 233-amino-acid chain: Upstream activation factor subunit spp27 (233 aa).

The 53-residue stretch at 1–53 folds into the DEK-C domain; sequence MEEYETDIKQILGTVDRQTVSAKQVRQLLEERRKVDLSAHKKDLNALILKCFD. Disordered regions lie at residues 55–122 and 194–233; these read TAAP…KPMK and IPDD…ESTA. An SWIB/MDM2 domain is found at 116–193; sequence PLNKPMKLSP…NKYLTNLMTK (78 aa). Residues 194–208 show a composition bias toward basic and acidic residues; the sequence is IPDDQLPKPQPKNEE.

As to quaternary structure, component of the UAF (upstream activation factor) complex which consists of spp27/uaf30, rrn5, rrn10, and histones H3 and H4. Interacts with rrn10.

The protein resides in the cytoplasm. Its subcellular location is the nucleus. Its function is as follows. Component of the UAF (upstream activation factor) complex which interacts with the upstream element of the RNA polymerase I promoter and forms a stable preinitiation complex. UAF seems to stimulate basal transcription to a fully activated level. This is Upstream activation factor subunit spp27 (spp27) from Schizosaccharomyces pombe (strain 972 / ATCC 24843) (Fission yeast).